Here is a 254-residue protein sequence, read N- to C-terminus: Probable septum site-determining protein MinC (254 aa).

This sequence belongs to the MinC family. As to quaternary structure, interacts with MinD and FtsZ.

Its function is as follows. Cell division inhibitor that blocks the formation of polar Z ring septums. Rapidly oscillates between the poles of the cell to destabilize FtsZ filaments that have formed before they mature into polar Z rings. Prevents FtsZ polymerization. The protein is Probable septum site-determining protein MinC of Burkholderia ambifaria (strain ATCC BAA-244 / DSM 16087 / CCUG 44356 / LMG 19182 / AMMD) (Burkholderia cepacia (strain AMMD)).